A 241-amino-acid chain; its full sequence is Biosynthetic peptidoglycan transglycosylase (241 aa).

Residues 18–38 (GVIGIIALWMAGILIFAFLPV) traverse the membrane as a helical segment.

Belongs to the glycosyltransferase 51 family.

It localises to the cell inner membrane. The catalysed reaction is [GlcNAc-(1-&gt;4)-Mur2Ac(oyl-L-Ala-gamma-D-Glu-L-Lys-D-Ala-D-Ala)](n)-di-trans,octa-cis-undecaprenyl diphosphate + beta-D-GlcNAc-(1-&gt;4)-Mur2Ac(oyl-L-Ala-gamma-D-Glu-L-Lys-D-Ala-D-Ala)-di-trans,octa-cis-undecaprenyl diphosphate = [GlcNAc-(1-&gt;4)-Mur2Ac(oyl-L-Ala-gamma-D-Glu-L-Lys-D-Ala-D-Ala)](n+1)-di-trans,octa-cis-undecaprenyl diphosphate + di-trans,octa-cis-undecaprenyl diphosphate + H(+). It functions in the pathway cell wall biogenesis; peptidoglycan biosynthesis. In terms of biological role, peptidoglycan polymerase that catalyzes glycan chain elongation from lipid-linked precursors. The sequence is that of Biosynthetic peptidoglycan transglycosylase from Yersinia pseudotuberculosis serotype IB (strain PB1/+).